The chain runs to 389 residues: Large envelope protein (389 aa).

M1 carries the N-acetylmethionine modification. G2 carries the N-myristoyl glycine; by host lipid modification. A pre-S1 region spans residues 2-108 (GTNLSVPNPL…PPLRDTHPQA (107 aa)). The tract at residues 2-163 (GTNLSVPNPL…LSKTGDPVPN (162 aa)) is pre-S. Topologically, residues 2–170 (GTNLSVPNPL…VPNMENIASG (169 aa)) are virion surface; in external conformation. The Intravirion; in internal conformation segment spans residues 2–242 (GTNLSVPNPL…PGYRWMCLRR (241 aa)). The interval 73–107 (ILTSVPAAPPPASTNRQSGRQPTPLSPPLRDTHPQ) is disordered. A compositionally biased stretch (polar residues) spans 85-95 (STNRQSGRQPT). Residues 109-163 (MQWNSTTFHQTLQDPRVRALYFPAGGSSSGTVSPAQNTVSAISSILSKTGDPVPN) are pre-S2. A helical transmembrane segment spans residues 171–191 (LLGPLLVLQAGFFLLTKILTI). Residues 192–242 (PQSLDSWWTSLNFLGGTPVCLGQNSQSQISSHSPTCCPPICPGYRWMCLRR) are Intravirion; in external conformation-facing. The chain crosses the membrane as a helical span at residues 243 to 263 (FIIFLCILLLCLIFLLVLLDY). At 264-337 (QGMLPVCPLI…WASVRFSWLS (74 aa)) the chain is on the virion surface side. Residue N309 is glycosylated (N-linked (GlcNAc...) asparagine; by host). A helical transmembrane segment spans residues 338–358 (LLVPFVQWFVGLSPTVWLSVI). Residues 359–364 (WMMWYW) are Intravirion-facing. The chain crosses the membrane as a helical span at residues 365–387 (GPSLYNILSPFMPLLPIFFCLWV). Residues 388–389 (YI) lie on the Virion surface side of the membrane.

The protein belongs to the orthohepadnavirus major surface antigen family. As to quaternary structure, interacts (via its myristoylated pre-S1 region) with the host SLC10A1/NTCP; this interaction is essential for viral entry. In its internal form (Li-HBsAg), interacts with the capsid protein and with the isoform S. Interacts with host chaperone CANX. In terms of assembly, associates with host chaperone CANX through its pre-S2 N glycan; this association may be essential for isoform M proper secretion. As to quaternary structure, interacts with isoform L. Interacts with the antigens of satellite virus HDV (HDVAgs); this interaction is required for encapsidation of HDV genomic RNA. Isoform M is N-terminally acetylated by host at a ratio of 90%, and N-glycosylated by host at the pre-S2 region. In terms of processing, myristoylated; this modification is essential for its interaction with the host protein SLC10A1/NTCP.

It localises to the virion membrane. The large envelope protein exists in two topological conformations, one which is termed 'external' or Le-HBsAg and the other 'internal' or Li-HBsAg. In its external conformation the protein attaches the virus to cell receptors and thereby initiating infection. This interaction determines the species specificity and liver tropism. This attachment induces virion internalization predominantly through caveolin-mediated endocytosis. The large envelope protein also assures fusion between virion membrane and endosomal membrane. In its internal conformation the protein plays a role in virion morphogenesis and mediates the contact with the nucleocapsid like a matrix protein. Functionally, the middle envelope protein plays an important role in the budding of the virion. It is involved in the induction of budding in a nucleocapsid independent way. In this process the majority of envelope proteins bud to form subviral lipoprotein particles of 22 nm of diameter that do not contain a nucleocapsid. The polypeptide is Large envelope protein (Hepatitis B virus genotype B1 subtype adw (isolate Japan/pJDW233/1988) (HBV-B)).